The primary structure comprises 196 residues: Adenylyl-sulfate kinase (196 aa).

31-38 (GLSGAGKS) provides a ligand contact to ATP. The Phosphoserine intermediate role is filled by S105.

This sequence belongs to the APS kinase family.

The catalysed reaction is adenosine 5'-phosphosulfate + ATP = 3'-phosphoadenylyl sulfate + ADP + H(+). It functions in the pathway sulfur metabolism; hydrogen sulfide biosynthesis; sulfite from sulfate: step 2/3. Its function is as follows. Catalyzes the synthesis of activated sulfate. The protein is Adenylyl-sulfate kinase (cysC) of Pseudomonas aeruginosa (strain ATCC 15692 / DSM 22644 / CIP 104116 / JCM 14847 / LMG 12228 / 1C / PRS 101 / PAO1).